A 255-amino-acid polypeptide reads, in one-letter code: U2 small nuclear ribonucleoprotein A' (255 aa).

4 LRR repeats span residues 20-41, 43-64, 65-86, and 89-110; these read RDRE…GATL, QFDA…PLLR, RLKT…LDQA, and CLTE…DPLA. The LRRCT domain occupies 123–161; it reads NPVTNKKHYRLYVIYKVPQVRVLDFQKVKLKERQEAEKM. Position 172 is an N6-acetyllysine; alternate (lysine 172). Lysine 172 is covalently cross-linked (Glycyl lysine isopeptide (Lys-Gly) (interchain with G-Cter in SUMO2); alternate). The segment at 174–201 is disordered; that stretch reads IARRSKTFNPGAGLPTDKKKGGPSPGDV. A phosphoserine mark is found at serine 178 and serine 197. A Glycyl lysine isopeptide (Lys-Gly) (interchain with G-Cter in SUMO2) cross-link involves residue lysine 221. The disordered stretch occupies residues 222–255; sequence GLLQSGQIPGRERRSGPTDDGEEEMEEDTVTNGS. 2 positions are modified to phosphoserine: serine 236 and serine 255. Over residues 240-255 the composition is skewed to acidic residues; that stretch reads DDGEEEMEEDTVTNGS.

The protein belongs to the U2 small nuclear ribonucleoprotein A family. As to quaternary structure, identified in the spliceosome B complex. Identified in the spliceosome C complex. Found in a pre-mRNA splicing complex with SFRS4, SFRS5, SNRNP70, SNRPA1, SRRM1 and SRRM2. Found in a pre-mRNA exonic splicing enhancer (ESE) complex with SNRNP70, SNRPA1, SRRM1 and TRA2B. Contributes to the binding of stem loop IV of U2 snRNA with SNRPB2.

The protein resides in the nucleus. Functionally, involved in pre-mRNA splicing as component of the spliceosome. Associated with sn-RNP U2, where it contributes to the binding of stem loop IV of U2 snRNA. This Homo sapiens (Human) protein is U2 small nuclear ribonucleoprotein A' (SNRPA1).